The sequence spans 208 residues: Peptidyl-tRNA hydrolase (208 aa).

Residue tyrosine 19 participates in tRNA binding. Histidine 24 (proton acceptor) is an active-site residue. Residues phenylalanine 71, asparagine 73, and asparagine 119 each coordinate tRNA.

The protein belongs to the PTH family. Monomer.

Its subcellular location is the cytoplasm. It carries out the reaction an N-acyl-L-alpha-aminoacyl-tRNA + H2O = an N-acyl-L-amino acid + a tRNA + H(+). Functionally, hydrolyzes ribosome-free peptidyl-tRNAs (with 1 or more amino acids incorporated), which drop off the ribosome during protein synthesis, or as a result of ribosome stalling. Catalyzes the release of premature peptidyl moieties from peptidyl-tRNA molecules trapped in stalled 50S ribosomal subunits, and thus maintains levels of free tRNAs and 50S ribosomes. The sequence is that of Peptidyl-tRNA hydrolase from Synechococcus elongatus (strain ATCC 33912 / PCC 7942 / FACHB-805) (Anacystis nidulans R2).